The chain runs to 48 residues: MAGTVVLRCCTSVTKVRTWKRCSKQIKEQRARLYIIWKCAVFLLSSHD.

The chain crosses the membrane as a helical span at residues 4–23; sequence TVVLRCCTSVTKVRTWKRCS. The interval 17–48 is required for DVL/RTFL small polypeptide activity; sequence RTWKRCSKQIKEQRARLYIIWKCAVFLLSSHD.

Belongs to the DVL/RTFL small polypeptides family.

It localises to the cell membrane. In terms of biological role, small polypeptide acting as a regulatory molecule which coordinates cellular responses required for differentiation, growth and development, probably by restricting polar cell proliferation in lateral organs and coordinating socket cell recruitment and differentiation at trichome sites. The polypeptide is Small polypeptide DEVIL 14 (Arabidopsis thaliana (Mouse-ear cress)).